We begin with the raw amino-acid sequence, 470 residues long: UDP-glycosyltransferase 72D1 (470 aa).

Residues serine 276, 343-345 (APQ), 360-368 (HCGWSSALE), and 382-385 (YAEQ) contribute to the UDP-alpha-D-glucose site.

It belongs to the UDP-glycosyltransferase family.

In Arabidopsis thaliana (Mouse-ear cress), this protein is UDP-glycosyltransferase 72D1 (UGT72D1).